Reading from the N-terminus, the 451-residue chain is UPF0210 protein NMCC_1554 (451 aa).

Belongs to the UPF0210 family. Homodimer.

In Neisseria meningitidis serogroup C (strain 053442), this protein is UPF0210 protein NMCC_1554.